The following is a 459-amino-acid chain: FAD-dependent monooxygenase nanF (459 aa).

FAD-binding residues include glutamate 49, glycine 62, and arginine 121. Active-site residues include arginine 200 and tyrosine 230. FAD-binding residues include aspartate 327 and glycine 340.

The protein belongs to the paxM FAD-dependent monooxygenase family. It depends on FAD as a cofactor.

It participates in secondary metabolite biosynthesis. Functionally, FAD-dependent monooxygenase; part of the gene cluster that mediates the biosynthesis of the benzazepine alkaloid nanangelenin A which contains an unprecedented 3,4-dihydro-1-benzazepine-2,5-dione-N-prenyl-N-acetoxy-anthranilamide scaffold. The first step of nanangelenin biosynthesis is catalyzed by the indoleamine 2,3-dioxygenase nanC which produces N-formyl-kynurenine through the catabolism of tryptophan. The two-module NRPS nanA then utilizes anthranilate (Ant) and L-kynurenine (L-Kyn) to assemble the dipeptide product nanangelenin B. The first adenylation domain of nanA (A1) loads anthranilate onto the T1 domain, while A2 loads kynurenine, generated through spontaneous nonenzymatic deformylation of the nanC-supplied N-formyl-kynurenine. The peptide bond formation between the tethered amino acids is catalyzed by the first condensation domain (C1) between anthranilate's carbonyl carbon and kynurenine's aliphatic primary amine. The second C domain (C2) catalyzes the final cyclization event between the aromatic amine of kynurenine and the tethered carbonyl carbon, yielding nanangelenin B. The terminal T3 domain enhances the catalytic efficiency of C2, suggesting the T2-tethered Ant-L-Kyn is transferred to T3 prior to cyclization by C2. Once released from nanA, nanangelenin B is then prenylated by the prenyltransferase nanD to form nanangelenin C. Nanangelenin C is then N-hydroxylated by the FAD-dependent monooxygenase nanF and further acetylated by the acetyltransferase nanB to yield nanangelenin F. Finally, the N-methyltransferase nanE methylates the amide nitrogen of 1-benzazepine to convert nanangelenin F into nanangelenin A. NanE is also able to methylate most of the intermediates of the pathway such as nanangelenin B and nanangelenin C to produce nanangelenin D and nanangelenin E, respectively. This is FAD-dependent monooxygenase nanF from Aspergillus nanangensis.